Reading from the N-terminus, the 248-residue chain is MSGNIAFGRFDDSFSAASLKAYVAEFISTLVFVFAGVGSAIAYTKLTGGAPLDPAGLVAVAVCHGFGLFVAVAIGANISGGHVNPAVTFGLALGGQITILTGVFYWIAQLLGAIVGAVLVQFCTGVATPTHGLSGVGAFEGVVMEIIVTFGLVYTVYATAADPKKGSLGTIAPIAIGFIVGANILVAGPFSGGSMNPARSFGPAVASGDYTNIWIYWVGPLVGGGLAGLVYRYVYMCGDHAPVASSEF.

2 helical membrane passes run 21 to 41 and 55 to 75; these read AYVA…GSAI and AGLV…VAIG. Residues 84 to 86 carry the NPA 1 motif; it reads NPA. 3 helical membrane-spanning segments follow: residues 87 to 109, 133 to 153, and 168 to 188; these read VTFG…WIAQ, LSGV…FGLV, and LGTI…LVAG. The NPA 2 signature appears at 196 to 198; sequence NPA. Residues 210–230 form a helical membrane-spanning segment; that stretch reads YTNIWIYWVGPLVGGGLAGLV.

The protein belongs to the MIP/aquaporin (TC 1.A.8) family. TIP (TC 1.A.8.10) subfamily. Expressed in roots and leaves.

It localises to the vacuole membrane. Functionally, aquaporins facilitate the transport of water and small neutral solutes across cell membranes. May be involved in transport from the vacuolar compartment to the cytoplasm. The sequence is that of Probable aquaporin TIP2-2 (TIP2-2) from Oryza sativa subsp. japonica (Rice).